A 636-amino-acid polypeptide reads, in one-letter code: MINITLPDGKIVESDGPVSGEDVAKGISEGFARNCVAVEVDGKLTDLSTPIETDASVVFITTKDEQGLDIMRHSAAHVMAEAILNLYPDAKLTIGPVIEDGFYYDIDMPPISEDDFPKIEQEINKIIKAKKPFVRKTLSKAEALDFYKDNAFKTELISELEDGTISIYEQGGFTDLCRGPHVPNTGLVKTLKLMKVSGAYWRGDSERPMLQRLYGTAFFDKKELKSYLHLLEEAKKRDHRKLGTALDLFSFHEEAAGMPFFHARGMELWNALLAYWREEHKKAGYVETKTPIMLNKSLWERSGHWENYRENMYTSLIEDFDYAIKPMNCPGGMLLYKTKHHSYNDLPIRAGEIGLVHRHELSGVLSGLFRVRAFHQDDAHIFMTEEMIEDEILGVLQLVERMYSTFGLGFHLELSTRPEKTIGTDEQWEKATEGLRAALDKSGRDYKINEGDGAFYGPKIDIHIKDALGRTWQCGTIQLDMNLPERFDLTYVGADNQRHRPVMIHRVIYGSIERFLGILIEHYAGKFPLWLSPCQAVVLAMNDDVAGYAKEVKARLEEAGLRMEIDLRAESINKKVRDAQLSKIPLMLTVGGKEEAAQTLAVRTLDGKVKYGVTIDNFLDKVLPHIETRNPDLVEF.

The TGS domain occupies 1–61 (MINITLPDGK…ETDASVVFIT (61 aa)). Residues 238–528 (DHRKLGTALD…LIEHYAGKFP (291 aa)) form a catalytic region. Zn(2+)-binding residues include cysteine 329, histidine 380, and histidine 505.

This sequence belongs to the class-II aminoacyl-tRNA synthetase family. Homodimer. The cofactor is Zn(2+).

The protein resides in the cytoplasm. The catalysed reaction is tRNA(Thr) + L-threonine + ATP = L-threonyl-tRNA(Thr) + AMP + diphosphate + H(+). Catalyzes the attachment of threonine to tRNA(Thr) in a two-step reaction: L-threonine is first activated by ATP to form Thr-AMP and then transferred to the acceptor end of tRNA(Thr). Also edits incorrectly charged L-seryl-tRNA(Thr). This Desulfatibacillum aliphaticivorans protein is Threonine--tRNA ligase.